A 418-amino-acid chain; its full sequence is L-rhamnose isomerase (418 aa).

Residues His-261, Asp-293, and Asp-295 each coordinate Mn(2+).

The protein belongs to the rhamnose isomerase family. The cofactor is Mn(2+).

It localises to the cytoplasm. It carries out the reaction L-rhamnopyranose = L-rhamnulose. It participates in carbohydrate degradation; L-rhamnose degradation; glycerone phosphate from L-rhamnose: step 1/3. Its function is as follows. Catalyzes the interconversion of L-rhamnose and L-rhamnulose. The sequence is that of L-rhamnose isomerase from Clostridium beijerinckii (strain ATCC 51743 / NCIMB 8052) (Clostridium acetobutylicum).